A 297-amino-acid chain; its full sequence is 33 kDa chaperonin (297 aa).

Disulfide bonds link C232/C234 and C266/C269.

It belongs to the HSP33 family. Post-translationally, under oxidizing conditions two disulfide bonds are formed involving the reactive cysteines. Under reducing conditions zinc is bound to the reactive cysteines and the protein is inactive.

Its subcellular location is the cytoplasm. Functionally, redox regulated molecular chaperone. Protects both thermally unfolding and oxidatively damaged proteins from irreversible aggregation. Plays an important role in the bacterial defense system toward oxidative stress. This chain is 33 kDa chaperonin, found in Pseudomonas aeruginosa (strain LESB58).